Reading from the N-terminus, the 480-residue chain is Serine carboxypeptidase-like 35 (480 aa).

Residues 1–20 form the signal peptide; sequence MKKNALWLLCILVLPAIACG. N-linked (GlcNAc...) asparagine glycans are attached at residues N79 and N146. 3 cysteine pairs are disulfide-bonded: C95–C363, C257–C270, and C294–C331. S188 is a catalytic residue. An N-linked (GlcNAc...) asparagine glycan is attached at N265. N352 is a glycosylation site (N-linked (GlcNAc...) asparagine). Catalysis depends on residues D399 and H452.

It belongs to the peptidase S10 family. Expressed in seedlings, flowers and siliques.

The protein resides in the secreted. Its function is as follows. Probable carboxypeptidase. The sequence is that of Serine carboxypeptidase-like 35 (SCPL35) from Arabidopsis thaliana (Mouse-ear cress).